A 662-amino-acid chain; its full sequence is Serine/threonine kinase-like domain-containing protein STKLD1 (662 aa).

The Protein kinase domain occupies 1-202 (MLNPGALGVN…ILDMATCSFL (202 aa)). ATP is bound by residues 2–10 (LNPGALGVN) and lysine 25. A disordered region spans residues 639–662 (LQEDQLEPPAGQEAPLQGEPLFRP).

Belongs to the protein kinase superfamily. Ser/Thr protein kinase family. STKL subfamily.

This is Serine/threonine kinase-like domain-containing protein STKLD1 (Stkld1) from Mus musculus (Mouse).